Reading from the N-terminus, the 198-residue chain is Ribonuclease HII (198 aa).

One can recognise an RNase H type-2 domain in the interval 3-198; that stretch reads FLEGGVDEAG…SWRTLRGESP (196 aa). A divalent metal cation-binding residues include D9, E10, and D104.

It belongs to the RNase HII family. Mn(2+) serves as cofactor. Requires Mg(2+) as cofactor.

It localises to the cytoplasm. It catalyses the reaction Endonucleolytic cleavage to 5'-phosphomonoester.. In terms of biological role, endonuclease that specifically degrades the RNA of RNA-DNA hybrids. In Pyrobaculum neutrophilum (strain DSM 2338 / JCM 9278 / NBRC 100436 / V24Sta) (Thermoproteus neutrophilus), this protein is Ribonuclease HII.